The chain runs to 261 residues: Ribosomal RNA small subunit methyltransferase J (261 aa).

Residues 129-130 (ER) and aspartate 182 contribute to the S-adenosyl-L-methionine site.

Belongs to the methyltransferase superfamily. RsmJ family.

The protein localises to the cytoplasm. It catalyses the reaction guanosine(1516) in 16S rRNA + S-adenosyl-L-methionine = N(2)-methylguanosine(1516) in 16S rRNA + S-adenosyl-L-homocysteine + H(+). Functionally, specifically methylates the guanosine in position 1516 of 16S rRNA. The polypeptide is Ribosomal RNA small subunit methyltransferase J (Desulfotalea psychrophila (strain LSv54 / DSM 12343)).